The sequence spans 288 residues: Wilms tumor protein homolog (288 aa).

The segment at 1–21 is disordered; the sequence is QGYSTVAFDGPPSYGHAPSHH. The short motif at 90–98 is the 9aaTAD element; it reads MTWNQMNLG. 3 C2H2-type zinc fingers span residues 162 to 186, 192 to 216, and 222 to 244; these read FMCAYPGCNKRYFKLSHLQMHSRKH, YQCDFKDCERRFSRSDQLKRHQRRH, and FQCKTCQRKFSRSDHLKTHTRTH. Important for interaction with target DNA stretches follow at residues 206–220 and 232–240; these read SDQLKRHQRRHTGVK and SRSDHLKTH. Positions 247 to 249 match the KTS motif motif; sequence KTS. The C2H2-type 4 zinc finger occupies 253–277; that stretch reads FSCRWPSCQKKFARSDELVRHHNMH.

The protein belongs to the EGR C2H2-type zinc-finger protein family.

The protein localises to the nucleus speckle. It localises to the nucleus. The protein resides in the nucleoplasm. It is found in the cytoplasm. Its function is as follows. Transcription factor that plays an important role in cellular development and cell survival. Recognizes and binds to the DNA sequence 5'-GCG(T/G)GGGCG-3'. Regulates the expression of numerous target genes. Plays an essential role for development of the urogenital system. It has a tumor suppressor as well as an oncogenic role in tumor formation. Function may be isoform-specific: isoforms lacking the KTS motif may act as transcription factors. Isoforms containing the KTS motif may bind mRNA and play a role in mRNA metabolism or splicing. This chain is Wilms tumor protein homolog (WT1), found in Alligator mississippiensis (American alligator).